Consider the following 592-residue polypeptide: Insulin-like growth factor 2 mRNA-binding protein 2 (592 aa).

RRM domains follow at residues 3 to 76 and 82 to 157; these read NKLY…YSVS and RRIQ…YIPD. S11 is subject to Phosphoserine. The interval 157–182 is disordered; the sequence is DEEVSSPSPPHRAREQGHGPGSSSQA. S162 and S164 each carry phosphoserine. 4 KH domains span residues 186 to 251, 267 to 334, 420 to 485, and 502 to 568; these read DFPL…CRMI, EVPL…EIEI, QETV…QGRI, and KLEA…QRKI. T543 carries the post-translational modification Phosphothreonine.

It belongs to the RRM IMP/VICKZ family. As to quaternary structure, can form homooligomers and heterooligomers with IGF2BP1 and IGF2BP3 in an RNA-dependent manner. Interacts with HNRPD. Interacts with IGF2BP1. Interacts with ELAVL1, DHX9, HNRNPU, MATR3 and PABPC1. Expressed in oocytes, granulosa cells of small and growing follicles and Leydig cells of the testis (at protein level). Expressed in testis and ovary.

The protein localises to the nucleus. The protein resides in the cytoplasm. Its subcellular location is the P-body. It localises to the stress granule. Functionally, RNA-binding factor that recruits target transcripts to cytoplasmic protein-RNA complexes (mRNPs). This transcript 'caging' into mRNPs allows mRNA transport and transient storage. It also modulates the rate and location at which target transcripts encounter the translational apparatus and shields them from endonuclease attacks or microRNA-mediated degradation. Preferentially binds to N6-methyladenosine (m6A)-containing mRNAs and increases their stability. Binds to the 5'-UTR of the insulin-like growth factor 2 (IGF2) mRNAs. Binding is isoform-specific. Binds to beta-actin/ACTB and MYC transcripts. Increases MYC mRNA stability by binding to the coding region instability determinant (CRD) and binding is enhanced by m6A-modification of the CRD. This is Insulin-like growth factor 2 mRNA-binding protein 2 (Igf2bp2) from Mus musculus (Mouse).